The following is a 337-amino-acid chain: Ribosomal RNA small subunit methyltransferase C (337 aa).

This sequence belongs to the methyltransferase superfamily. RsmC family. In terms of assembly, monomer.

It is found in the cytoplasm. It carries out the reaction guanosine(1207) in 16S rRNA + S-adenosyl-L-methionine = N(2)-methylguanosine(1207) in 16S rRNA + S-adenosyl-L-homocysteine + H(+). Its function is as follows. Specifically methylates the guanine in position 1207 of 16S rRNA in the 30S particle. This is Ribosomal RNA small subunit methyltransferase C from Acinetobacter baumannii (strain ACICU).